A 375-amino-acid polypeptide reads, in one-letter code: Peroxisomal targeting signal 2 receptor (375 aa).

6 WD repeats span residues 58–89, 102–133, 172–203, 218–249, 281–312, and 340–372; these read LTQD…RLFD, EHER…KIWS, KNRN…SLFD, HSGL…RIWD, AHGL…RIWR, and QHSE…FVWN.

The protein belongs to the WD repeat peroxin-7 family. As to quaternary structure, interacts with PEX21.

The protein localises to the cytoplasm. It localises to the cytosol. The protein resides in the peroxisome matrix. Functionally, receptor required for the peroxisomal import of proteins containing a C-terminal PTS2-type peroxisomal targeting signal, such as 3-oxoacyl-CoA thiolase. Specifically binds to cargo proteins containing a PTS2 peroxisomal targeting signal in the cytosol. Cargo protein-binding triggers interaction with PEX21 and formation of a ternary complex composed of PEX21 and PEX7 along with PTS2-containing cargo proteins, which is tranlocated into peroxisomes by passing through the PEX13-PEX14 docking complex. The sequence is that of Peroxisomal targeting signal 2 receptor from Saccharomyces cerevisiae (strain ATCC 204508 / S288c) (Baker's yeast).